The sequence spans 402 residues: Prostaglandin E2 receptor EP1 subtype (402 aa).

The Extracellular portion of the chain corresponds to methionine 1–serine 35. N-linked (GlcNAc...) asparagine glycosylation is found at asparagine 8 and asparagine 25. Residues proline 36–glycine 62 traverse the membrane as a helical segment. The Cytoplasmic portion of the chain corresponds to arginine 63 to threonine 72. Residues phenylalanine 73–leucine 96 traverse the membrane as a helical segment. The Extracellular segment spans residues arginine 97 to histidine 111. Cysteine 110 and cysteine 188 are oxidised to a cystine. The helical transmembrane segment at phenylalanine 112–valine 133 threads the bilayer. Residues glutamate 134 to arginine 155 are Cytoplasmic-facing. The helical transmembrane segment at leucine 156 to glycine 177 threads the bilayer. Topologically, residues arginine 178–alanine 201 are extracellular. The helical transmembrane segment at leucine 202–leucine 227 threads the bilayer. Over alanine 228 to glutamate 294 the chain is Cytoplasmic. A disordered region spans residues serine 238–alanine 266. A helical membrane pass occupies residues methionine 295–valine 321. The Extracellular segment spans residues glycine 322 to proline 332. The helical transmembrane segment at leucine 333–leucine 354 threads the bilayer. Residues arginine 355–phenylalanine 402 lie on the Cytoplasmic side of the membrane.

Belongs to the G-protein coupled receptor 1 family. Phosphorylated. As to expression, abundant in kidney. Lower level expression in lung, skeletal muscle and spleen, lowest expression in testis and not detected in liver brain and heart.

Its subcellular location is the cell membrane. Receptor for prostaglandin E2 (PGE2). The activity of this receptor is mediated by G(q) proteins which activate a phosphatidylinositol-calcium second messenger system. May play a role as an important modulator of renal function. Implicated the smooth muscle contractile response to PGE2 in various tissues. This chain is Prostaglandin E2 receptor EP1 subtype (PTGER1), found in Homo sapiens (Human).